A 164-amino-acid polypeptide reads, in one-letter code: MSTFSGDETAPFFGFLGAAAALVFSCMGAAYGTAKSGVGVASMGVMRPELVMKSIVPVVMAGVLGIYGLIIAVIISTGINPKAKSYYLFDGYAHLSSGLACGLAGLSAGMAIGIVGDAGVRANAQQPKLFVGMILILIFAEALALYGLIVGIILSSRAGQSRAE.

Residues 1 to 11 (MSTFSGDETAP) lie on the Lumenal side of the membrane. A helical transmembrane segment spans residues 12–32 (FFGFLGAAAALVFSCMGAAYG). Residues 33–54 (TAKSGVGVASMGVMRPELVMKS) are Cytoplasmic-facing. A helical transmembrane segment spans residues 55–75 (IVPVVMAGVLGIYGLIIAVII). Over 76–94 (STGINPKAKSYYLFDGYAH) the chain is Lumenal. A helical membrane pass occupies residues 95 to 116 (LSSGLACGLAGLSAGMAIGIVG). At 117–128 (DAGVRANAQQPK) the chain is on the cytoplasmic side. Residues 129–154 (LFVGMILILIFAEALALYGLIVGIIL) traverse the membrane as a helical segment. Topologically, residues 155 to 164 (SSRAGQSRAE) are lumenal.

This sequence belongs to the V-ATPase proteolipid subunit family. V-ATPase is a heteromultimeric enzyme composed of a peripheral catalytic V1 complex (components A to H) attached to an integral membrane V0 proton pore complex (components: a, c, c'', d and e). The proteolipid components c and c'' are present as a hexameric ring that forms the proton-conducting pore. In terms of tissue distribution, expressed in leaf, root, flower and silique.

The protein resides in the vacuole membrane. Proton-conducting pore forming subunit of the membrane integral V0 complex of vacuolar ATPase. V-ATPase is responsible for acidifying a variety of intracellular compartments in eukaryotic cells. The sequence is that of V-type proton ATPase subunit c3 (VHA-c3) from Arabidopsis thaliana (Mouse-ear cress).